The sequence spans 593 residues: UvrABC system protein C (593 aa).

A GIY-YIG domain is found at 17–94 (MEPGCYLMKD…IKQYQPRYNI (78 aa)). In terms of domain architecture, UVR spans 199–234 (KTILKSLEERMLTASESLDFERAKEYRDLIQHIQNL).

The protein belongs to the UvrC family. Interacts with UvrB in an incision complex.

The protein resides in the cytoplasm. In terms of biological role, the UvrABC repair system catalyzes the recognition and processing of DNA lesions. UvrC both incises the 5' and 3' sides of the lesion. The N-terminal half is responsible for the 3' incision and the C-terminal half is responsible for the 5' incision. The sequence is that of UvrABC system protein C from Staphylococcus aureus (strain MRSA252).